Consider the following 121-residue polypeptide: UPF0102 protein Hhal_2103 (121 aa).

The segment at 1–20 is disordered; that stretch reads MMAPQTTRNDPRQRGQEAEE. The segment covering 9 to 20 has biased composition (basic and acidic residues); that stretch reads NDPRQRGQEAEE.

The protein belongs to the UPF0102 family.

This is UPF0102 protein Hhal_2103 from Halorhodospira halophila (strain DSM 244 / SL1) (Ectothiorhodospira halophila (strain DSM 244 / SL1)).